A 267-amino-acid chain; its full sequence is Proteasome subunit alpha (267 aa).

The tract at residues 231 to 267 (ETLLQERDSKESAESEEPIESEEGKKTGKKSDADSSD) is disordered. Basic and acidic residues-rich tracts occupy residues 234-243 (LQERDSKESA) and 252-267 (EEGKKTGKKSDADSSD).

Belongs to the peptidase T1A family. In terms of assembly, the 20S proteasome core is composed of 14 alpha and 14 beta subunits that assemble into four stacked heptameric rings, resulting in a barrel-shaped structure. The two inner rings, each composed of seven catalytic beta subunits, are sandwiched by two outer rings, each composed of seven alpha subunits. The catalytic chamber with the active sites is on the inside of the barrel. Has a gated structure, the ends of the cylinder being occluded by the N-termini of the alpha-subunits. Is capped by the proteasome-associated ATPase, ARC.

The protein resides in the cytoplasm. It functions in the pathway protein degradation; proteasomal Pup-dependent pathway. With respect to regulation, the formation of the proteasomal ATPase ARC-20S proteasome complex, likely via the docking of the C-termini of ARC into the intersubunit pockets in the alpha-rings, may trigger opening of the gate for substrate entry. Interconversion between the open-gate and close-gate conformations leads to a dynamic regulation of the 20S proteasome proteolysis activity. Functionally, component of the proteasome core, a large protease complex with broad specificity involved in protein degradation. In Mycobacterium ulcerans (strain Agy99), this protein is Proteasome subunit alpha.